The sequence spans 423 residues: Glycine amidinotransferase, mitochondrial (423 aa).

Residues Met1–Thr43 constitute a mitochondrion transit peptide. The tract at residues Thr43–Asp63 is disordered. A phosphoserine mark is found at Ser46 and Ser49. The segment covering Ala52–Pro61 has biased composition (basic and acidic residues). Position 170 (Asp170) interacts with arginine. Catalysis depends on residues Asp254 and His303. 4 residues coordinate arginine: Asp305, Arg322, Ser354, and Ser355. Lys385 carries the post-translational modification N6-acetyllysine. Catalysis depends on Cys407, which acts as the Amidino-cysteine intermediate.

Belongs to the amidinotransferase family. In terms of assembly, homodimer.

The protein resides in the mitochondrion inner membrane. It catalyses the reaction L-arginine + glycine = guanidinoacetate + L-ornithine. The enzyme catalyses 4-aminobutanoate + L-arginine = 4-guanidinobutanoate + L-ornithine. It carries out the reaction beta-alanine + L-arginine = 3-guanidinopropanoate + L-ornithine. The catalysed reaction is taurine + L-arginine = taurocyamine + L-ornithine. It participates in amine and polyamine biosynthesis; creatine biosynthesis; creatine from L-arginine and glycine: step 1/2. Transamidinase that catalyzes the transfer of the amidino group of L-arginine onto the amino moiety of acceptor metabolites such as glycine, beta-alanine, gamma-aminobutyric acid (GABA) and taurine yielding the corresponding guanidine derivatives. Catalyzes the rate-limiting step of creatine biosynthesis, namely the transfer of the amidino group from L-arginine to glycine to generate guanidinoacetate, which is then methylated by GAMT to form creatine. Provides creatine as a source for ATP generation in tissues with high energy demands, in particular skeletal muscle, heart and brain. The protein is Glycine amidinotransferase, mitochondrial (GATM) of Macaca fascicularis (Crab-eating macaque).